A 67-amino-acid chain; its full sequence is Small ribosomal subunit protein eS17 (67 aa).

Belongs to the eukaryotic ribosomal protein eS17 family.

This chain is Small ribosomal subunit protein eS17, found in Pyrococcus horikoshii (strain ATCC 700860 / DSM 12428 / JCM 9974 / NBRC 100139 / OT-3).